Here is a 320-residue protein sequence, read N- to C-terminus: Ribosomal RNA small subunit methyltransferase H (320 aa).

S-adenosyl-L-methionine-binding positions include 42 to 44, Asp-62, Phe-86, Asp-108, and Gln-115; that span reads GGH.

It belongs to the methyltransferase superfamily. RsmH family.

The protein resides in the cytoplasm. The catalysed reaction is cytidine(1402) in 16S rRNA + S-adenosyl-L-methionine = N(4)-methylcytidine(1402) in 16S rRNA + S-adenosyl-L-homocysteine + H(+). Functionally, specifically methylates the N4 position of cytidine in position 1402 (C1402) of 16S rRNA. This is Ribosomal RNA small subunit methyltransferase H from Yersinia pseudotuberculosis serotype O:1b (strain IP 31758).